A 328-amino-acid polypeptide reads, in one-letter code: Phosphate acyltransferase (328 aa).

It belongs to the PlsX family. Homodimer. Probably interacts with PlsY.

Its subcellular location is the cytoplasm. It catalyses the reaction a fatty acyl-[ACP] + phosphate = an acyl phosphate + holo-[ACP]. It functions in the pathway lipid metabolism; phospholipid metabolism. Catalyzes the reversible formation of acyl-phosphate (acyl-PO(4)) from acyl-[acyl-carrier-protein] (acyl-ACP). This enzyme utilizes acyl-ACP as fatty acyl donor, but not acyl-CoA. This chain is Phosphate acyltransferase, found in Staphylococcus aureus (strain MRSA252).